We begin with the raw amino-acid sequence, 227 residues long: Extracellular deoxyribonuclease (227 aa).

A signal peptide spans 1-20; that stretch reads MFRPLLSFTLARLVSLPLHA.

The protein belongs to the EndA/NucM nuclease family.

Its subcellular location is the secreted. The sequence is that of Extracellular deoxyribonuclease from Aeromonas hydrophila.